The primary structure comprises 242 residues: ATP synthase subunit a (242 aa).

6 helical membrane-spanning segments follow: residues 29–49 (SAAYMLLASVLALTYFYLAFS), 84–104 (FVPVIFTLFVFILFCNLFGMI), 114–134 (IIITFALAILVFLMVTIVGFV), 140–160 (FLSLFLPHGTPLWLAPLMIII), 189–209 (VIASFVITLMIYLKFLPIPLM), and 210–230 (VILIGFEIFVAILQAYIFTIL).

This sequence belongs to the ATPase A chain family. F-type ATPases have 2 components, CF(1) - the catalytic core - and CF(0) - the membrane proton channel. CF(1) has five subunits: alpha(3), beta(3), gamma(1), delta(1), epsilon(1). CF(0) has three main subunits: a(1), b(2) and c(9-12). The alpha and beta chains form an alternating ring which encloses part of the gamma chain. CF(1) is attached to CF(0) by a central stalk formed by the gamma and epsilon chains, while a peripheral stalk is formed by the delta and b chains.

The protein resides in the cell inner membrane. Functionally, key component of the proton channel; it plays a direct role in the translocation of protons across the membrane. This chain is ATP synthase subunit a, found in Rickettsia bellii (strain OSU 85-389).